Here is a 320-residue protein sequence, read N- to C-terminus: Lipoyl synthase (320 aa).

The tract at residues 9 to 31 (ANDARPRHPEKAHRPDQPIQRKP) is disordered. The span at 12-31 (ARPRHPEKAHRPDQPIQRKP) shows a compositional bias: basic and acidic residues. [4Fe-4S] cluster contacts are provided by C60, C65, C71, C86, C90, C93, and S299. The Radical SAM core domain occupies 72–288 (WEKKHATFMI…ETTAYAKGFL (217 aa)).

Belongs to the radical SAM superfamily. Lipoyl synthase family. [4Fe-4S] cluster is required as a cofactor.

The protein localises to the cytoplasm. It carries out the reaction [[Fe-S] cluster scaffold protein carrying a second [4Fe-4S](2+) cluster] + N(6)-octanoyl-L-lysyl-[protein] + 2 oxidized [2Fe-2S]-[ferredoxin] + 2 S-adenosyl-L-methionine + 4 H(+) = [[Fe-S] cluster scaffold protein] + N(6)-[(R)-dihydrolipoyl]-L-lysyl-[protein] + 4 Fe(3+) + 2 hydrogen sulfide + 2 5'-deoxyadenosine + 2 L-methionine + 2 reduced [2Fe-2S]-[ferredoxin]. It functions in the pathway protein modification; protein lipoylation via endogenous pathway; protein N(6)-(lipoyl)lysine from octanoyl-[acyl-carrier-protein]: step 2/2. Catalyzes the radical-mediated insertion of two sulfur atoms into the C-6 and C-8 positions of the octanoyl moiety bound to the lipoyl domains of lipoate-dependent enzymes, thereby converting the octanoylated domains into lipoylated derivatives. The sequence is that of Lipoyl synthase from Methylobacterium nodulans (strain LMG 21967 / CNCM I-2342 / ORS 2060).